Reading from the N-terminus, the 135-residue chain is Probable transcription factor At2g20613 (135 aa).

Residues 1–104 (MSHKRFNPLT…KRGGGGGEEA (104 aa)) form a disordered region. A compositionally biased stretch (acidic residues) spans 28–41 (DSSSDEETDSDSDS). Residues 62–80 (KSVKISEKSVAKRSRETHE) show a composition bias toward basic and acidic residues.

The protein belongs to the GeBP family.

This chain is Probable transcription factor At2g20613, found in Arabidopsis thaliana (Mouse-ear cress).